We begin with the raw amino-acid sequence, 255 residues long: Pimeloyl-[acyl-carrier protein] methyl ester esterase (255 aa).

Residues Trp-18, 78–79 (SL), and 139–143 (FLALD) contribute to the substrate site. The active-site Nucleophile is Ser-78. Catalysis depends on residues Asp-203 and His-233. Residue His-233 coordinates substrate.

It belongs to the AB hydrolase superfamily. Carboxylesterase BioH family. Monomer.

Its subcellular location is the cytoplasm. It catalyses the reaction 6-carboxyhexanoyl-[ACP] methyl ester + H2O = 6-carboxyhexanoyl-[ACP] + methanol + H(+). Its pathway is cofactor biosynthesis; biotin biosynthesis. The physiological role of BioH is to remove the methyl group introduced by BioC when the pimeloyl moiety is complete. It allows to synthesize pimeloyl-ACP via the fatty acid synthetic pathway through the hydrolysis of the ester bonds of pimeloyl-ACP esters. The polypeptide is Pimeloyl-[acyl-carrier protein] methyl ester esterase (Xylella fastidiosa (strain 9a5c)).